Here is a 291-residue protein sequence, read N- to C-terminus: Meteorin (291 aa).

The signal sequence occupies residues 1–21; that stretch reads MLVATLLCALCCGLLAASAHA. Disulfide bonds link C28–C49, C80–C116, C169–C240, C172–C264, and C182–C286.

The protein belongs to the meteorin family. In terms of assembly, monomer. As to expression, highly expressed in brain. Expressed in undifferentiated neural progenitors and in astrocyte lineage, particularly in Bergmann glia, a subtype of radial glia, and a few discrete neuronal populations residing in the superior colliculus, the ocular motor nucleus, the raphe and pontine nuclei, and in various thalamic nuclei. Weakly expressed in heart, kidney, skeletal muscle, spleen, testis, gut and lung.

It is found in the secreted. In terms of biological role, involved in both glial cell differentiation and axonal network formation during neurogenesis. Promotes astrocyte differentiation and transforms cerebellar astrocytes into radial glia. Also induces axonal extension in small and intermediate neurons of sensory ganglia by activating nearby satellite glia. The sequence is that of Meteorin (Metrn) from Mus musculus (Mouse).